Consider the following 510-residue polypeptide: Lysine--tRNA ligase (510 aa).

Residues E420 and E427 each coordinate Mg(2+).

It belongs to the class-II aminoacyl-tRNA synthetase family. Homodimer. The cofactor is Mg(2+).

The protein resides in the cytoplasm. The catalysed reaction is tRNA(Lys) + L-lysine + ATP = L-lysyl-tRNA(Lys) + AMP + diphosphate. This Vibrio vulnificus (strain YJ016) protein is Lysine--tRNA ligase.